Here is a 59-residue protein sequence, read N- to C-terminus: uncharacterized protein (59 aa).

2 consecutive transmembrane segments (helical) span residues 1 to 21 and 30 to 50; these read MNMY…YIFI and GSWI…PYFY.

It localises to the cell membrane. This is an uncharacterized protein from Bacillus subtilis (strain 168).